The following is a 316-amino-acid chain: Cytochrome c biogenesis protein CcsA (316 aa).

Transmembrane regions (helical) follow at residues 12 to 32 (HISL…LLVY), 44 to 64 (GMVA…IYSG), 71 to 91 (LYES…IPYF), 98 to 118 (LNVL…SGVL), 145 to 165 (LSYA…VILF), 222 to 242 (VISL…VWAN), 256 to 270 (TWAF…IYLH), and 283 to 303 (AIVA…VNLL).

It belongs to the CcmF/CycK/Ccl1/NrfE/CcsA family. May interact with Ccs1.

Its subcellular location is the plastid. It localises to the chloroplast thylakoid membrane. Required during biogenesis of c-type cytochromes (cytochrome c6 and cytochrome f) at the step of heme attachment. This chain is Cytochrome c biogenesis protein CcsA, found in Ranunculus macranthus (Large buttercup).